A 239-amino-acid chain; its full sequence is MTAPLSVFVTGTDTEIGKTFVSAAMLHGFARHGLRAAALKPVAAGAYERDGVWRNEDADQLDAAANVALPPELRTPFLLKAPAAPHIVAAQEGVTLDLDTIVACHREALTRADVVVVEGVGGFRVPLNDTQDTADLAVALGLPVVLVVGVRLGCISHALLTADAIRQRGLTLAGWVANHVDPAMSFADENVATIRDWLAREHRAPLIGRIAHMTPAAPESAAAMLDIAALVESLRTARR.

15–20 contacts ATP; it reads EIGKTF. Thr19 serves as a coordination point for Mg(2+). Lys40 is an active-site residue. Residues Asp57, 118 to 121, and 178 to 179 contribute to the ATP site; these read EGVG and NH. The Mg(2+) site is built by Asp57 and Glu118.

It belongs to the dethiobiotin synthetase family. Homodimer. The cofactor is Mg(2+).

It is found in the cytoplasm. The catalysed reaction is (7R,8S)-7,8-diammoniononanoate + CO2 + ATP = (4R,5S)-dethiobiotin + ADP + phosphate + 3 H(+). The protein operates within cofactor biosynthesis; biotin biosynthesis; biotin from 7,8-diaminononanoate: step 1/2. In terms of biological role, catalyzes a mechanistically unusual reaction, the ATP-dependent insertion of CO2 between the N7 and N8 nitrogen atoms of 7,8-diaminopelargonic acid (DAPA, also called 7,8-diammoniononanoate) to form a ureido ring. This chain is ATP-dependent dethiobiotin synthetase BioD, found in Burkholderia cenocepacia (strain HI2424).